A 514-amino-acid polypeptide reads, in one-letter code: Histidine ammonia-lyase (514 aa).

Residues 147-149 (ASG) constitute a cross-link (5-imidazolinone (Ala-Gly)). A 2,3-didehydroalanine (Ser) modification is found at Ser148.

The protein belongs to the PAL/histidase family. Contains an active site 4-methylidene-imidazol-5-one (MIO), which is formed autocatalytically by cyclization and dehydration of residues Ala-Ser-Gly.

It is found in the cytoplasm. It catalyses the reaction L-histidine = trans-urocanate + NH4(+). It participates in amino-acid degradation; L-histidine degradation into L-glutamate; N-formimidoyl-L-glutamate from L-histidine: step 1/3. The chain is Histidine ammonia-lyase from Gloeobacter violaceus (strain ATCC 29082 / PCC 7421).